The chain runs to 329 residues: Malate dehydrogenase (329 aa).

12 to 18 (GAAGQIG) serves as a coordination point for NAD(+). Substrate is bound by residues Arg93 and Arg99. NAD(+)-binding positions include Asn106, Gln113, and 130–132 (VGN). Asn132 and Arg163 together coordinate substrate. The active-site Proton acceptor is His188.

Belongs to the LDH/MDH superfamily. MDH type 2 family.

It catalyses the reaction (S)-malate + NAD(+) = oxaloacetate + NADH + H(+). Functionally, catalyzes the reversible oxidation of malate to oxaloacetate. In Streptomyces griseus subsp. griseus (strain JCM 4626 / CBS 651.72 / NBRC 13350 / KCC S-0626 / ISP 5235), this protein is Malate dehydrogenase.